Reading from the N-terminus, the 317-residue chain is MFTRILGTGSYLPKNIRSNIVLEKMVDTSHEWIVARTGIQERRISTSDETVAKMGYFAAKRALDMSCVHSDKVGIIIVATTSSSHAFPSSACQIQRDLHIRDTIAFDLSAACSGFVYALGVADQYVKNGSVDYALVVGSDTLSHALNPRDRGTLILFGDGAGAVVLGRSKTPGIISIHLHADGDHGDLLTLPNCNRKSPAISNYLTMSGNKVFKIAVSVLARVIDETLNVNNLHRDELDWLVPHQANLRIISATAKRLDMDMRKVVITLDRHGNTSAASVPLALDEAVRDGRIKSGQLVLLEAFGAGFTWGSALLRF.

Residues cysteine 112 and histidine 244 contribute to the active site. The tract at residues 245–249 (QANLR) is ACP-binding. Residue asparagine 274 is part of the active site.

This sequence belongs to the thiolase-like superfamily. FabH family. In terms of assembly, homodimer.

The protein resides in the cytoplasm. It catalyses the reaction malonyl-[ACP] + acetyl-CoA + H(+) = 3-oxobutanoyl-[ACP] + CO2 + CoA. It participates in lipid metabolism; fatty acid biosynthesis. In terms of biological role, catalyzes the condensation reaction of fatty acid synthesis by the addition to an acyl acceptor of two carbons from malonyl-ACP. Catalyzes the first condensation reaction which initiates fatty acid synthesis and may therefore play a role in governing the total rate of fatty acid production. Possesses both acetoacetyl-ACP synthase and acetyl transacylase activities. Its substrate specificity determines the biosynthesis of branched-chain and/or straight-chain of fatty acids. This chain is Beta-ketoacyl-[acyl-carrier-protein] synthase III, found in Blochmanniella pennsylvanica (strain BPEN).